Consider the following 25-residue polypeptide: Flagellar filament core protein flaB3 (25 aa).

It belongs to the bacterial flagellin family. As to quaternary structure, the flagellum consists of an outer layer composed of two sheath proteins, flaA1 (44 kDa) and flaA2 (35 kDa) around a core that contains three proteins flaB1 (37 kDa), flaB2 (34 kDa) and flaB3 (32 kDa).

The protein localises to the periplasmic flagellum. It localises to the periplasm. In terms of biological role, component of the core of the flagella. The protein is Flagellar filament core protein flaB3 (flaB3) of Brachyspira hyodysenteriae (Treponema hyodysenteriae).